The sequence spans 179 residues: Acireductone dioxygenase (179 aa).

His97, His99, Glu103, and His141 together coordinate Fe(2+). Ni(2+) contacts are provided by His97, His99, Glu103, and His141.

This sequence belongs to the acireductone dioxygenase (ARD) family. Monomer. Fe(2+) is required as a cofactor. Ni(2+) serves as cofactor.

It carries out the reaction 1,2-dihydroxy-5-(methylsulfanyl)pent-1-en-3-one + O2 = 3-(methylsulfanyl)propanoate + CO + formate + 2 H(+). It catalyses the reaction 1,2-dihydroxy-5-(methylsulfanyl)pent-1-en-3-one + O2 = 4-methylsulfanyl-2-oxobutanoate + formate + 2 H(+). It functions in the pathway amino-acid biosynthesis; L-methionine biosynthesis via salvage pathway; L-methionine from S-methyl-5-thio-alpha-D-ribose 1-phosphate: step 5/6. In terms of biological role, catalyzes 2 different reactions between oxygen and the acireductone 1,2-dihydroxy-3-keto-5-methylthiopentene (DHK-MTPene) depending upon the metal bound in the active site. Fe-containing acireductone dioxygenase (Fe-ARD) produces formate and 2-keto-4-methylthiobutyrate (KMTB), the alpha-ketoacid precursor of methionine in the methionine recycle pathway. Ni-containing acireductone dioxygenase (Ni-ARD) produces methylthiopropionate, carbon monoxide and formate, and does not lie on the methionine recycle pathway. This chain is Acireductone dioxygenase, found in Gluconacetobacter diazotrophicus (strain ATCC 49037 / DSM 5601 / CCUG 37298 / CIP 103539 / LMG 7603 / PAl5).